The following is a 356-amino-acid chain: MTARTLLVMAGGTGGHVFPGLAVARALRDEGWRVVWLGNRTGMEATLVPKHDIPMEYIQFGGLRGKGLLTKLLLPLNLLRAFWQSIGALRRVKPDVVLGMGGYITFPAGMMASLLGRPLVLHEQNSIAGLANKVLAKVADRVLCAFPDALPNSEWTGNPVRAELAQIPAPESRYDHRAGPLHVLVVGGSLGAAALNDVVPKAIALLPEGQRPVVKHQAGAKQIDTLRANYAAAGVAGDTVPFIDDMAAAYADADLVICRAGAMTVSEVAAAGVAALFVPFPHAVDDHQTTNATFLSKQGAALLVQQNELTAEGLAKTLAGLSRTQLKDMARAARGLAKPEATRRVAEICSQLAGKS.

Residues threonine 13–glycine 15, asparagine 125, arginine 161, serine 189, isoleucine 243, and glutamine 288 each bind UDP-N-acetyl-alpha-D-glucosamine.

The protein belongs to the glycosyltransferase 28 family. MurG subfamily.

Its subcellular location is the cell inner membrane. It carries out the reaction di-trans,octa-cis-undecaprenyl diphospho-N-acetyl-alpha-D-muramoyl-L-alanyl-D-glutamyl-meso-2,6-diaminopimeloyl-D-alanyl-D-alanine + UDP-N-acetyl-alpha-D-glucosamine = di-trans,octa-cis-undecaprenyl diphospho-[N-acetyl-alpha-D-glucosaminyl-(1-&gt;4)]-N-acetyl-alpha-D-muramoyl-L-alanyl-D-glutamyl-meso-2,6-diaminopimeloyl-D-alanyl-D-alanine + UDP + H(+). It participates in cell wall biogenesis; peptidoglycan biosynthesis. In terms of biological role, cell wall formation. Catalyzes the transfer of a GlcNAc subunit on undecaprenyl-pyrophosphoryl-MurNAc-pentapeptide (lipid intermediate I) to form undecaprenyl-pyrophosphoryl-MurNAc-(pentapeptide)GlcNAc (lipid intermediate II). This chain is UDP-N-acetylglucosamine--N-acetylmuramyl-(pentapeptide) pyrophosphoryl-undecaprenol N-acetylglucosamine transferase, found in Cupriavidus metallidurans (strain ATCC 43123 / DSM 2839 / NBRC 102507 / CH34) (Ralstonia metallidurans).